We begin with the raw amino-acid sequence, 492 residues long: N-succinylglutamate 5-semialdehyde dehydrogenase (492 aa).

An NAD(+)-binding site is contributed by 220-225 (GRANTG). Residues E243 and C277 contribute to the active site.

Belongs to the aldehyde dehydrogenase family. AstD subfamily.

It carries out the reaction N-succinyl-L-glutamate 5-semialdehyde + NAD(+) + H2O = N-succinyl-L-glutamate + NADH + 2 H(+). Its pathway is amino-acid degradation; L-arginine degradation via AST pathway; L-glutamate and succinate from L-arginine: step 4/5. Functionally, catalyzes the NAD-dependent reduction of succinylglutamate semialdehyde into succinylglutamate. The chain is N-succinylglutamate 5-semialdehyde dehydrogenase from Shigella boydii serotype 4 (strain Sb227).